Reading from the N-terminus, the 315-residue chain is Large ribosomal subunit protein uL10 (315 aa).

A compositionally biased stretch (low complexity) spans 285-294 (AAAPAASAAP). The disordered stretch occupies residues 285–315 (AAAPAASAAPAKEEKEESEESDDDMGFGLFD). Residues 300 to 309 (EESEESDDDM) show a composition bias toward acidic residues.

Belongs to the universal ribosomal protein uL10 family. P0 forms a pentameric complex by interaction with dimers of P1 and P2. In terms of processing, phosphorylated.

Functionally, ribosomal protein P0 is the functional equivalent of E.coli protein L10. The polypeptide is Large ribosomal subunit protein uL10 (RPLP0) (Lithobates sylvaticus (Wood frog)).